The chain runs to 382 residues: Chaperone protein DnaJ (382 aa).

Positions 5 to 70 (DYYDLLGLSK…DKRAAYDRYG (66 aa)) constitute a J domain. A CR-type zinc finger spans residues 138–216 (GTKVPINYVT…CSGSGRVRDE (79 aa)). 8 residues coordinate Zn(2+): Cys-151, Cys-154, Cys-168, Cys-171, Cys-190, Cys-193, Cys-204, and Cys-207. CXXCXGXG motif repeat units follow at residues 151-158 (CSSCSGSG), 168-175 (CNTCHGAG), 190-197 (CHVCNGEG), and 204-211 (CKKCSGSG).

It belongs to the DnaJ family. In terms of assembly, homodimer. Zn(2+) serves as cofactor.

It localises to the cytoplasm. Functionally, participates actively in the response to hyperosmotic and heat shock by preventing the aggregation of stress-denatured proteins and by disaggregating proteins, also in an autonomous, DnaK-independent fashion. Unfolded proteins bind initially to DnaJ; upon interaction with the DnaJ-bound protein, DnaK hydrolyzes its bound ATP, resulting in the formation of a stable complex. GrpE releases ADP from DnaK; ATP binding to DnaK triggers the release of the substrate protein, thus completing the reaction cycle. Several rounds of ATP-dependent interactions between DnaJ, DnaK and GrpE are required for fully efficient folding. Also involved, together with DnaK and GrpE, in the DNA replication of plasmids through activation of initiation proteins. This Ehrlichia ruminantium (strain Gardel) protein is Chaperone protein DnaJ.